The chain runs to 212 residues: Protein HP-25 homolog 1 (212 aa).

Residues 1–34 form the signal peptide; it reads MPGGRRRVGSMNIAGFWILAQFVLLLVANVKSSA. A disordered region spans residues 36 to 66; it reads SELCGPRGARGPPGLSGLPGPPGYTGPIGMP. The segment covering 40–53 has biased composition (low complexity); that stretch reads GPRGARGPPGLSGL. The 37-residue stretch at 40-76 folds into the Collagen-like domain; sequence GPRGARGPPGLSGLPGPPGYTGPIGMPGLTGRPGLPG. The 131-residue stretch at 82–212 folds into the C1q domain; it reads PPLPQSAFSV…VFYGFLLNGN (131 aa). A glycan (N-linked (GlcNAc...) asparagine) is linked at Asn125.

It is found in the secreted. This Bos taurus (Bovine) protein is Protein HP-25 homolog 1.